Here is a 278-residue protein sequence, read N- to C-terminus: Orotidine 5'-phosphate decarboxylase (278 aa).

Residue Lys-95 is the Proton donor of the active site.

The protein belongs to the OMP decarboxylase family. Type 2 subfamily.

The catalysed reaction is orotidine 5'-phosphate + H(+) = UMP + CO2. The protein operates within pyrimidine metabolism; UMP biosynthesis via de novo pathway; UMP from orotate: step 2/2. In Mycobacterium ulcerans (strain Agy99), this protein is Orotidine 5'-phosphate decarboxylase.